Reading from the N-terminus, the 259-residue chain is Protein unc-50 homolog (259 aa).

N-acetylmethionine is present on methionine 1. Topologically, residues 1–82 (MLPSTSLNSS…TKDQWARDDP (82 aa)) are cytoplasmic. A Phosphoserine modification is found at serine 6. A helical membrane pass occupies residues 83–103 (AFLVLLSIWLCVSTIGFGFVL). Topologically, residues 104–115 (DMGFFETIKLLL) are lumenal. A helical transmembrane segment spans residues 116-136 (WVVFIDCVGVGLLISTLMWFI). The Cytoplasmic segment spans residues 137 to 163 (SNKYLVKRQSRDYDVEWGYAFDVHLNA). A helical transmembrane segment spans residues 164–184 (FYPLLVILHFIQLFFINHVIL). Residues 185 to 187 (TDT) are Lumenal-facing. The helical transmembrane segment at 188-208 (FIGYLVGNTLWLIAVGYYIYV) threads the bilayer. Residues 209 to 222 (TFLGYSALPFLKNT) lie on the Cytoplasmic side of the membrane. A helical membrane pass occupies residues 223 to 243 (VVLLYPFAPLIVLYGLSLALG). The Lumenal portion of the chain corresponds to 244–259 (WNFTHTLCSFYKYRVK).

This sequence belongs to the unc-50 family. As to expression, expressed in brain, kidney and testis, and at lower levels in heart.

The protein resides in the nucleus inner membrane. Its subcellular location is the golgi apparatus membrane. Functionally, involved in the cell surface expression of neuronal nicotinic receptors. Binds RNA. The chain is Protein unc-50 homolog (Unc50) from Rattus norvegicus (Rat).